The chain runs to 53 residues: Large ribosomal subunit protein bL32 (53 aa).

Residues 1 to 27 (MAVQQNKKSRSRRDMRRSHDALTTAAV) form a disordered region. Residues 7–16 (KKSRSRRDMR) are compositionally biased toward basic residues.

It belongs to the bacterial ribosomal protein bL32 family.

This Glaesserella parasuis serovar 5 (strain SH0165) (Haemophilus parasuis) protein is Large ribosomal subunit protein bL32.